The primary structure comprises 464 residues: F-box/FBD/LRR-repeat protein At1g80470 (464 aa).

Residues 15–62 (DWISGLADDLLLQILSKVPTRESVFTSRMSKRWRNLWRHVPALDLDSS) enclose the F-box domain. 6 LRR repeats span residues 96 to 122 (EEHCDPEFVSRIDHVVKRGLKDLTILS), 123 to 150 (KVNIEDDSVRMPVSLYSCATLVNLTLYS), 152 to 178 (VFDAPRAQLVSLPCLKTMHLEAVKFDG), 197 to 222 (IITHDHDELGDVSVRSPSLRRFKLES), 223 to 249 (MREDYDECEDPNVEVDTPGLEYMSITD), and 273 to 298 (DAEDEDSVIHDFITAISTVRELTISA). The region spanning 359–413 (KEEINLSLVPHCFESSLEYVQLKVPITVSETSSKMELAIYFVRNCSVLKKLMLNE) is the FBD domain.

The protein is F-box/FBD/LRR-repeat protein At1g80470 of Arabidopsis thaliana (Mouse-ear cress).